The sequence spans 29 residues: DLMQFETLIMKIAGRSGVWIYGSYGCYCG.

Residues Tyr27 and Gly29 each contribute to the Ca(2+) site.

Requires Ca(2+) as cofactor. As to expression, expressed by the venom gland.

It localises to the secreted. It catalyses the reaction a 1,2-diacyl-sn-glycero-3-phosphocholine + H2O = a 1-acyl-sn-glycero-3-phosphocholine + a fatty acid + H(+). Snake venom phospholipase A2 (PLA2) that inhibits the ADP- and collagen-induced human platelet aggregation. Exhibits strong hydrolytic activities and prefers the anionic micelles (dPPC with deoxycholate) to the zwitterionic micelles (dPPC with Triton X-100). PLA2 catalyzes the calcium-dependent hydrolysis of the 2-acyl groups in 3-sn-phosphoglycerides. This Ovophis monticola (Chinese mountain pitviper) protein is Acidic phospholipase A2 Omo-E6.